The sequence spans 609 residues: Elongation factor 4 (609 aa).

A tr-type G domain is found at 11-193 (ERIRNFSIIA…QIVEKIPAPS (183 aa)). GTP contacts are provided by residues 23–28 (DHGKST) and 140–143 (NKID).

This sequence belongs to the TRAFAC class translation factor GTPase superfamily. Classic translation factor GTPase family. LepA subfamily.

The protein localises to the cell membrane. It carries out the reaction GTP + H2O = GDP + phosphate + H(+). Its function is as follows. Required for accurate and efficient protein synthesis under certain stress conditions. May act as a fidelity factor of the translation reaction, by catalyzing a one-codon backward translocation of tRNAs on improperly translocated ribosomes. Back-translocation proceeds from a post-translocation (POST) complex to a pre-translocation (PRE) complex, thus giving elongation factor G a second chance to translocate the tRNAs correctly. Binds to ribosomes in a GTP-dependent manner. The chain is Elongation factor 4 from Geobacillus thermodenitrificans (strain NG80-2).